The chain runs to 1166 residues: Serine-aspartate repeat-containing protein E (1166 aa).

Positions M1–A52 are cleaved as a signal peptide. The YSIRK-G/S signaling motif signature appears at F23–S34. Residues A53–K606 form a ligand binding A region region. Residues E54–P253 are disordered. Over residues A61–V75 the composition is skewed to basic and acidic residues. A compositionally biased stretch (low complexity) spans E77 to N90. The segment covering I92–S108 has biased composition (basic and acidic residues). The segment covering N118–Q129 has biased composition (polar residues). The segment covering N130–T145 has biased composition (basic and acidic residues). Low complexity predominate over residues T166–E178. Positions I179–T212 are enriched in polar residues. Positions S221 to T246 are enriched in basic and acidic residues. 3 consecutive CNA-B domains span residues L607–P719, K720–P829, and K830–T940. The interval V904–N1141 is disordered. 2 stretches are compositionally biased toward acidic residues: residues T908–E918 and Y935–S1105. The short motif at L1129–G1133 is the LPXTG sorting signal element. T1132 is modified (pentaglycyl murein peptidoglycan amidated threonine). Positions G1133–K1166 are cleaved as a propeptide — removed by sortase.

It belongs to the serine-aspartate repeat-containing protein (SDr) family. In terms of assembly, interacts with host complement factor H/CFAH (via C-terminus). Interacts with host complement regulator C4BPA.

Its subcellular location is the secreted. It is found in the cell wall. In terms of biological role, cell surface-associated calcium-binding protein which plays an important role in adhesion and pathogenesis. Contributes to the resistance to killing by innate immune components in blood and thus attenuates bacterial clearance by interacting with host complement factor H/CFAH and modulating its activity. Also inhibits bacterial opsonization and killing by interacting with host complement regulator C4BPA and thus inhibiting classical complement pathway activation. This Staphylococcus aureus (strain COL) protein is Serine-aspartate repeat-containing protein E (sdrE).